Consider the following 189-residue polypeptide: Peptidyl-tRNA hydrolase (189 aa).

A tRNA-binding site is contributed by tyrosine 15. The active-site Proton acceptor is the histidine 20. 3 residues coordinate tRNA: phenylalanine 66, asparagine 68, and asparagine 114.

It belongs to the PTH family. As to quaternary structure, monomer.

It localises to the cytoplasm. It carries out the reaction an N-acyl-L-alpha-aminoacyl-tRNA + H2O = an N-acyl-L-amino acid + a tRNA + H(+). Its function is as follows. Hydrolyzes ribosome-free peptidyl-tRNAs (with 1 or more amino acids incorporated), which drop off the ribosome during protein synthesis, or as a result of ribosome stalling. Functionally, catalyzes the release of premature peptidyl moieties from peptidyl-tRNA molecules trapped in stalled 50S ribosomal subunits, and thus maintains levels of free tRNAs and 50S ribosomes. The sequence is that of Peptidyl-tRNA hydrolase from Streptococcus pyogenes serotype M3 (strain ATCC BAA-595 / MGAS315).